The following is a 152-amino-acid chain: Sorting nexin-3 (152 aa).

Residues 30–147 enclose the PX domain; the sequence is NFLEIEVRSP…CAFIQDPQWD (118 aa). Residues arginine 73, serine 75, lysine 99, arginine 104, and arginine 113 each contribute to the a 1,2-diacyl-sn-glycero-3-phospho-(1D-myo-inositol-3-phosphate) site.

This sequence belongs to the sorting nexin family.

It is found in the cytoplasm. It localises to the golgi apparatus membrane. The protein resides in the prevacuolar compartment membrane. Its function is as follows. Required for retention of late Golgi membrane proteins. Component of the retrieval machinery that functions by direct interaction with the cytosolic tails of certain TGN membrane proteins during the sorting/budding process at the prevacuolar compartment. Binds phosphatidylinositol 3-phosphate (PtdIns(P3)). This is Sorting nexin-3 (SNX3) from Yarrowia lipolytica (strain CLIB 122 / E 150) (Yeast).